Reading from the N-terminus, the 102-residue chain is Crustacean hyperglycemic hormones 3 (102 aa).

The signal sequence occupies residues 1–22 (MIALRLIAVTLVVAMAASTTWA). Intrachain disulfides connect C35/C71, C51/C67, and C54/C80. V100 is subject to Valine amide.

This sequence belongs to the arthropod CHH/MIH/GIH/VIH hormone family.

The protein localises to the secreted. Hormone found in the sinus gland of isopods and decapods which controls the blood sugar level. Has a secretagogue action over the amylase released from the midgut gland. May act as a stress hormone and may be involved in the control of molting and reproduction. This chain is Crustacean hyperglycemic hormones 3 (CHH3), found in Penaeus monodon (Giant tiger prawn).